The chain runs to 307 residues: MRVLFAGTPAVALPSLEALLAAGFDVVGVLTRPDAPIGRKRVLAPSPVAARAEELGLPIIRANRLDTEVQEQIALLRPEVAAIVAYGALVPPAALTIPDYGWINLHFSLLPAWRGAAPVQHAVINGDDVTGAVTFQLEAGLDTGPVFGTVTEFIRRDDTGSALLTRLSHSGSVLLTQTLSAVAAGTATAIEQTGPVSLAPKLTIEDGRIDFSVPALAVSRRIRGVTEEPGAWTVLAGQRFKVAAATLRPDRRELAPGQLAQAGKSLLVGTGSHAIELLAVQPAGKKMMDAADWLRGVGMVDGMVFGE.

Position 108–111 (108–111 (SLLP)) interacts with (6S)-5,6,7,8-tetrahydrofolate.

The protein belongs to the Fmt family.

It catalyses the reaction L-methionyl-tRNA(fMet) + (6R)-10-formyltetrahydrofolate = N-formyl-L-methionyl-tRNA(fMet) + (6S)-5,6,7,8-tetrahydrofolate + H(+). Functionally, attaches a formyl group to the free amino group of methionyl-tRNA(fMet). The formyl group appears to play a dual role in the initiator identity of N-formylmethionyl-tRNA by promoting its recognition by IF2 and preventing the misappropriation of this tRNA by the elongation apparatus. The sequence is that of Methionyl-tRNA formyltransferase from Renibacterium salmoninarum (strain ATCC 33209 / DSM 20767 / JCM 11484 / NBRC 15589 / NCIMB 2235).